The following is a 562-amino-acid chain: Oxygen-dependent choline dehydrogenase (562 aa).

4–33 (DYIIIGAGSAGNVLATRLTEDPNTTVLLLE) is an FAD binding site. His-473 functions as the Proton acceptor in the catalytic mechanism.

This sequence belongs to the GMC oxidoreductase family. Requires FAD as cofactor.

The catalysed reaction is choline + A = betaine aldehyde + AH2. It carries out the reaction betaine aldehyde + NAD(+) + H2O = glycine betaine + NADH + 2 H(+). The protein operates within amine and polyamine biosynthesis; betaine biosynthesis via choline pathway; betaine aldehyde from choline (cytochrome c reductase route): step 1/1. Functionally, involved in the biosynthesis of the osmoprotectant glycine betaine. Catalyzes the oxidation of choline to betaine aldehyde and betaine aldehyde to glycine betaine at the same rate. In Escherichia coli (strain SMS-3-5 / SECEC), this protein is Oxygen-dependent choline dehydrogenase.